The primary structure comprises 334 residues: Tetratricopeptide repeat protein 24 (334 aa).

4 TPR repeats span residues 35–68, 72–105, 112–145, and 152–185; these read GPFY…CRQP, ATVL…HGSV, GRSF…AQDT, and WQAC…CQHE. Positions 220-258 are disordered; that stretch reads PGKLQTSRKAKTSARVQSSAEDAQESQWEGEASEGGHEK. The segment covering 233 to 246 has biased composition (polar residues); it reads ARVQSSAEDAQESQ.

The polypeptide is Tetratricopeptide repeat protein 24 (Ttc24) (Mus musculus (Mouse)).